We begin with the raw amino-acid sequence, 396 residues long: Elongation factor Tu (396 aa).

A tr-type G domain is found at 10–206 (KLHVNVGTIG…ALDTHIPNPE (197 aa)). The tract at residues 19–26 (GHVDHGKT) is G1. 19–26 (GHVDHGKT) contributes to the GTP binding site. Thr-26 lines the Mg(2+) pocket. Residues 60-64 (GITIS) are G2. A G3 region spans residues 81–84 (DCPG). Residues 81 to 85 (DCPGH) and 136 to 139 (NKAD) contribute to the GTP site. A G4 region spans residues 136 to 139 (NKAD). The interval 174–176 (SAL) is G5.

This sequence belongs to the TRAFAC class translation factor GTPase superfamily. Classic translation factor GTPase family. EF-Tu/EF-1A subfamily. As to quaternary structure, monomer.

The protein localises to the cytoplasm. The catalysed reaction is GTP + H2O = GDP + phosphate + H(+). GTP hydrolase that promotes the GTP-dependent binding of aminoacyl-tRNA to the A-site of ribosomes during protein biosynthesis. In Xylella fastidiosa (strain Temecula1 / ATCC 700964), this protein is Elongation factor Tu.